Reading from the N-terminus, the 204-residue chain is MSSGNFQLLAGLGNPGSKYTSTRHNVGFMALERLAKKESVQFAMNKKIFGHIANIEIGANKRKLLMPNTYMNESGRSISAAIKWFDLEINQILIFVDDMDLPLGKLRFREGGGSGGHNGLKDIIKHLGSQDFCRLRIGIGPPSINQGDRKQKTIPHVLGKFDQAESKVITKVLDKVIKGLEVIEQYGLVKGTSFLNSSLTATDG.

A tRNA-binding site is contributed by tyrosine 19. The active-site Proton acceptor is histidine 24. Positions 70, 72, and 118 each coordinate tRNA.

Belongs to the PTH family. In terms of assembly, monomer.

The protein resides in the cytoplasm. It carries out the reaction an N-acyl-L-alpha-aminoacyl-tRNA + H2O = an N-acyl-L-amino acid + a tRNA + H(+). In terms of biological role, hydrolyzes ribosome-free peptidyl-tRNAs (with 1 or more amino acids incorporated), which drop off the ribosome during protein synthesis, or as a result of ribosome stalling. Catalyzes the release of premature peptidyl moieties from peptidyl-tRNA molecules trapped in stalled 50S ribosomal subunits, and thus maintains levels of free tRNAs and 50S ribosomes. This chain is Peptidyl-tRNA hydrolase, found in Prochlorococcus marinus (strain SARG / CCMP1375 / SS120).